A 118-amino-acid polypeptide reads, in one-letter code: Cell division protein FtsB (118 aa).

Residues Met-1–Trp-6 lie on the Cytoplasmic side of the membrane. A helical membrane pass occupies residues Leu-7–Phe-24. At Gly-25–Arg-118 the chain is on the periplasmic side. Positions Gly-30–Gly-66 form a coiled coil. The tract at residues Leu-98–Arg-118 is disordered. The segment covering Ser-103–Arg-118 has biased composition (basic and acidic residues).

Belongs to the FtsB family. Part of a complex composed of FtsB, FtsL and FtsQ.

The protein localises to the cell inner membrane. In terms of biological role, essential cell division protein. May link together the upstream cell division proteins, which are predominantly cytoplasmic, with the downstream cell division proteins, which are predominantly periplasmic. The sequence is that of Cell division protein FtsB from Xylella fastidiosa (strain M12).